The chain runs to 469 residues: MNPNQKIITIGSICMVVGIISLILQIGNIISIWISHSIQTGSQNHTGICNQSIITYKNSTWVNQTYVNISNTNVVAGKGTTPVILAGNSSLCPIRGWAIYSKDNGIRIGSKGDVFVIREPFISCSHLECRTFFLTQGALLNDKHSNGTVKDRSPYRALMSCPVGEAPSPYNSRFESVAWSACACHDGMGWLTIGISGPDDEAVAVLKYNGIITETIKSWRKKILRTQESECVCVNGSCFTIMTDGPSDGPASYKIFKIEKGKVTKSIELDAPNSHYEECSCYPDTGKVMCVCRDNWHGSNRPWVSFDQNLDYQIGYICSGVFGDNPRPKDGKGSCGPVYVDGANGVKGFSYRYGNGVWIGRIKSNSSRQGFEMIWDPNGWTETDSSFFVKQDVVAMTDWSGYSGSFVQHPELTGLDCMRPCFWVELIRGRPKEKTIWTSGSSISFCGVNSDTVDWSWPDGAELPFTIDK.

The Intravirion segment spans residues M1–K6. Residues I7–G27 form a helical membrane-spanning segment. Residues G11–W33 are involved in apical transport and lipid raft association. Over N28–K469 the chain is Virion surface. Positions H36–S90 are hypervariable stalk region. 6 N-linked (GlcNAc...) asparagine; by host glycosylation sites follow: N44, N50, N58, N63, N68, and N88. Residues L91–K469 form a head of neuraminidase region. Disulfide bonds link C92/C417, C124/C129, C184/C231, C233/C238, C279/C292, C281/C290, C318/C335, and C421/C446. Substrate is bound at residue R118. N-linked (GlcNAc...) asparagine; by host glycosylation is present at N146. The active-site Proton donor/acceptor is D151. R152 is a substrate binding site. An N-linked (GlcNAc...) asparagine; by host glycan is attached at N235. Substrate is bound at residue E277–E278. Substrate is bound at residue R293. Residues D294, G298, D324, and N344 each coordinate Ca(2+). N365 carries N-linked (GlcNAc...) asparagine; by host glycosylation. R368 lines the substrate pocket. Residue Y402 is the Nucleophile of the active site.

Belongs to the glycosyl hydrolase 34 family. In terms of assembly, homotetramer. Requires Ca(2+) as cofactor. Post-translationally, N-glycosylated.

It localises to the virion membrane. Its subcellular location is the host apical cell membrane. It carries out the reaction Hydrolysis of alpha-(2-&gt;3)-, alpha-(2-&gt;6)-, alpha-(2-&gt;8)- glycosidic linkages of terminal sialic acid residues in oligosaccharides, glycoproteins, glycolipids, colominic acid and synthetic substrates.. With respect to regulation, inhibited by the neuraminidase inhibitors zanamivir (Relenza) and oseltamivir (Tamiflu). These drugs interfere with the release of progeny virus from infected cells and are effective against all influenza strains. Resistance to neuraminidase inhibitors is quite rare. Its function is as follows. Catalyzes the removal of terminal sialic acid residues from viral and cellular glycoconjugates. Cleaves off the terminal sialic acids on the glycosylated HA during virus budding to facilitate virus release. Additionally helps virus spread through the circulation by further removing sialic acids from the cell surface. These cleavages prevent self-aggregation and ensure the efficient spread of the progeny virus from cell to cell. Otherwise, infection would be limited to one round of replication. Described as a receptor-destroying enzyme because it cleaves a terminal sialic acid from the cellular receptors. May facilitate viral invasion of the upper airways by cleaving the sialic acid moieties on the mucin of the airway epithelial cells. Likely to plays a role in the budding process through its association with lipid rafts during intracellular transport. May additionally display a raft-association independent effect on budding. Plays a role in the determination of host range restriction on replication and virulence. Sialidase activity in late endosome/lysosome traffic seems to enhance virus replication. The chain is Neuraminidase from Influenza A virus (strain A/USA:Huston/AA/1945 H1N1).